The primary structure comprises 856 residues: Mechanosensitive ion channel protein 6 (856 aa).

Disordered regions lie at residues 45-86 (GEGN…DPPT) and 116-226 (RGLT…PFAA). 2 stretches are compositionally biased toward basic and acidic residues: residues 70-85 (QQKD…EDPP) and 129-140 (TKRDPVGRRDSR). Residues 155-168 (SGNNAPIQRSSSTL) are compositionally biased toward polar residues. Serine 211 bears the Phosphoserine mark. The span at 217 to 226 (EEEEDDPFAA) shows a compositional bias: acidic residues. Helical transmembrane passes span 242–262 (IVLE…TLAI), 283–303 (LVLI…VFFI), 323–343 (AVQN…LFDE), and 360–380 (IFVC…LVKV). Serine 462 is subject to Phosphoserine. A run of 2 helical transmembrane segments spans residues 615–635 (MVNI…LGIT) and 651–671 (AFIF…LFVI).

Belongs to the MscS (TC 1.A.23) family.

The protein localises to the membrane. Functionally, mechanosensitive channel that opens in response to stretch forces in the membrane lipid bilayer. The protein is Mechanosensitive ion channel protein 6 (MSL6) of Arabidopsis thaliana (Mouse-ear cress).